A 150-amino-acid chain; its full sequence is Aspartate 1-decarboxylase 2 (150 aa).

Ser-24 acts as the Schiff-base intermediate with substrate; via pyruvic acid in catalysis. Residue Ser-24 is modified to Pyruvic acid (Ser). Residue Thr-56 participates in substrate binding. Catalysis depends on Tyr-57, which acts as the Proton donor. A substrate-binding site is contributed by 72–74 (GAA).

This sequence belongs to the PanD family. As to quaternary structure, heterooctamer of four alpha and four beta subunits. Pyruvate is required as a cofactor. In terms of processing, is synthesized initially as an inactive proenzyme, which is activated by self-cleavage at a specific serine bond to produce a beta-subunit with a hydroxyl group at its C-terminus and an alpha-subunit with a pyruvoyl group at its N-terminus.

The protein resides in the cytoplasm. It carries out the reaction L-aspartate + H(+) = beta-alanine + CO2. It functions in the pathway cofactor biosynthesis; (R)-pantothenate biosynthesis; beta-alanine from L-aspartate: step 1/1. In terms of biological role, catalyzes the pyruvoyl-dependent decarboxylation of aspartate to produce beta-alanine. The polypeptide is Aspartate 1-decarboxylase 2 (Mesorhizobium japonicum (strain LMG 29417 / CECT 9101 / MAFF 303099) (Mesorhizobium loti (strain MAFF 303099))).